The sequence spans 361 residues: MALEEEEESQNAPFCVLDGLFCEEESEFHEQVDLCDESVEKFPFLNLGLSDHDMLWDDDELSTLISKQEPCLYDEILDDEFLVLCREKALDWIFKVKSHYGFNSLTALLAVNYFDRFITSRKFQTDKPWMSQLTALACLSLAAKVEEIRVPFLLDFQVEEARYVFEAKTIQRMELLVLSTLDWRMHPVTPISFFDHIIRRYSFKSHHQLEFLSRCESLLLSIIPDSRFLSFSPSVLATAIMVSVIRDLKMCDEAVYQSQLMTLLKVDSEKVNKCYELVLDHSPSKKRMMNWMQQPASPIGVFDASFSSDSSNESWVVSASASVSSSPSSEPLLKRRRVQEQQMRLSSINRMFFDVLSSSPR.

This sequence belongs to the cyclin family. Cyclin D subfamily.

Its function is as follows. Promotes divisions in the guard cells (GCs) after the guard mother cells (GMC) symmetric division. The polypeptide is Cyclin-D3-3 (CYCD3-3) (Arabidopsis thaliana (Mouse-ear cress)).